We begin with the raw amino-acid sequence, 185 residues long: Ribosome hibernation promotion factor (185 aa).

The probably still associates with ribosome stretch occupies residues 1-125; it reads MIKFNIRGEN…PLDTTDEVAE (125 aa). The tract at residues 126–185 is required but not sufficient to restore ribosome dimerization, in vitro will replace E.coli RMF in ribosome dimerization; that stretch reads DHVDIVRTKHVALKPMDAEEAVLQMDMLGHDFYVFTDADSNGTHVVYRRTDGRYGLIETE.

This sequence belongs to the HPF/YfiA ribosome-associated protein family. Long HPF subfamily. As to quaternary structure, interacts with 100S ribosomes in stationary phase; alters the relative position of the 30S and 50S subunits.

It localises to the cytoplasm. In terms of biological role, required for dimerization of active 70S ribosomes into 100S ribosomes in stationary phase; 100S ribosomes are translationally inactive and sometimes present during exponential growth. Able to dimerize E.coli 70S ribosomes in vitro. This is Ribosome hibernation promotion factor from Lactococcus lactis subsp. cremoris (strain MG1363).